Consider the following 320-residue polypeptide: o-succinylbenzoate synthase (320 aa).

The active-site Proton donor is Lys-133. Positions 161, 190, and 213 each coordinate Mg(2+). The active-site Proton acceptor is the Lys-235.

It belongs to the mandelate racemase/muconate lactonizing enzyme family. MenC type 1 subfamily. It depends on a divalent metal cation as a cofactor.

It carries out the reaction (1R,6R)-6-hydroxy-2-succinyl-cyclohexa-2,4-diene-1-carboxylate = 2-succinylbenzoate + H2O. It participates in quinol/quinone metabolism; 1,4-dihydroxy-2-naphthoate biosynthesis; 1,4-dihydroxy-2-naphthoate from chorismate: step 4/7. It functions in the pathway quinol/quinone metabolism; menaquinone biosynthesis. Its function is as follows. Converts 2-succinyl-6-hydroxy-2,4-cyclohexadiene-1-carboxylate (SHCHC) to 2-succinylbenzoate (OSB). In Shigella boydii serotype 4 (strain Sb227), this protein is o-succinylbenzoate synthase.